The following is a 416-amino-acid chain: MAFQKITVQNPIVEMDGDEMTRVIWKSIKDKLILPFLELDIKYFSLGLPHRDATDDKVTVESAEATQKYNVAIKCATITPDEARVKEFNLKSMWRSPNGTIRNILNGTVFREPIMCKNIPRLVPGWTKPICIGRHAFGDQYRATDTVIKGAGKLKLVFVPEGSDEKTEFEVYNFTGAGGVALSMYNTDESVRSFAEASMNMAFQKKWPLYLSTKNTILKKYDGRFKDIFQEVYEANWKSKYEEAGIWYEHRLIDDMVAYALKSEGGYVWACKNYDGDVQSDFLAQGFGSLGLMTSVLVCPDGKTIEAEAAHGTVTRHYRVHQKGGETSTNSIASIFAWTRGLAHRATLDNNERLLDFTEKLEAACIGAVESGKMTKDLALIIIHGSKLSREHYLNTEEFIDAVADELKARLLKAKA.

Residues Thr-77–Thr-79 and Arg-84 contribute to the NADP(+) site. Thr-79 provides a ligand contact to substrate. Residues Ser-96–Arg-102, Arg-111, and Arg-134 contribute to the substrate site. Residue Asp-254 coordinates Mn(2+). Lys-262 serves as a coordination point for NADP(+). Mn(2+) is bound at residue Asp-277. NADP(+) is bound by residues Gly-312 to His-317 and Asn-330.

This sequence belongs to the isocitrate and isopropylmalate dehydrogenases family. Heterodimer. Mg(2+) is required as a cofactor. It depends on Mn(2+) as a cofactor.

It is found in the cytoplasm. It carries out the reaction D-threo-isocitrate + NADP(+) = 2-oxoglutarate + CO2 + NADPH. May supply 2-oxoglutarate for amino acid biosynthesis and ammonia assimilation via the glutamine synthetase/glutamate synthase (GS/GOGAT) pathway. The polypeptide is Isocitrate dehydrogenase [NADP] (ICDH-1) (Solanum tuberosum (Potato)).